A 210-amino-acid polypeptide reads, in one-letter code: Guanylate kinase (210 aa).

The Guanylate kinase-like domain occupies 8-188 (GNLFIIAAPS…SLASLEHIVL (181 aa)). An ATP-binding site is contributed by 15-22 (APSGAGKS).

This sequence belongs to the guanylate kinase family.

The protein resides in the cytoplasm. It carries out the reaction GMP + ATP = GDP + ADP. Its function is as follows. Essential for recycling GMP and indirectly, cGMP. The chain is Guanylate kinase from Idiomarina loihiensis (strain ATCC BAA-735 / DSM 15497 / L2-TR).